We begin with the raw amino-acid sequence, 166 residues long: Small ribosomal subunit protein uS5 (166 aa).

An S5 DRBM domain is found at 11–74 (LNEKLIAVNR…EKARRNMFTI (64 aa)).

The protein belongs to the universal ribosomal protein uS5 family. As to quaternary structure, part of the 30S ribosomal subunit. Contacts proteins S4 and S8.

With S4 and S12 plays an important role in translational accuracy. Functionally, located at the back of the 30S subunit body where it stabilizes the conformation of the head with respect to the body. The chain is Small ribosomal subunit protein uS5 from Aliivibrio salmonicida (strain LFI1238) (Vibrio salmonicida (strain LFI1238)).